The sequence spans 1070 residues: DNA-directed RNA polymerase subunit beta (1070 aa).

The protein belongs to the RNA polymerase beta chain family. In terms of assembly, in plastids the minimal PEP RNA polymerase catalytic core is composed of four subunits: alpha, beta, beta', and beta''. When a (nuclear-encoded) sigma factor is associated with the core the holoenzyme is formed, which can initiate transcription.

Its subcellular location is the plastid. It localises to the chloroplast. The enzyme catalyses RNA(n) + a ribonucleoside 5'-triphosphate = RNA(n+1) + diphosphate. Functionally, DNA-dependent RNA polymerase catalyzes the transcription of DNA into RNA using the four ribonucleoside triphosphates as substrates. This chain is DNA-directed RNA polymerase subunit beta, found in Illicium oligandrum (Star anise).